We begin with the raw amino-acid sequence, 408 residues long: Zinc-regulated transporter 1 (408 aa).

3 helical membrane-spanning segments follow: residues 64–84 (IGAI…PLVL), 101–121 (LFAR…HLLA), and 141–161 (WAPG…VLLN). 2 positions are modified to phosphothreonine: threonine 234 and threonine 237. 5 helical membrane-spanning segments follow: residues 254–274 (FIIL…TTAV), 279–299 (FKTL…GLGS), 315–335 (WVLG…GLGV), 351–371 (GVLD…ELLA), and 387–407 (LIYL…LGKW).

It belongs to the ZIP transporter (TC 2.A.5) family.

It is found in the endoplasmic reticulum membrane. Functionally, high-affinity zinc transport protein. Regulates intracellular zinc levels. This Schizosaccharomyces pombe (strain 972 / ATCC 24843) (Fission yeast) protein is Zinc-regulated transporter 1 (zrt1).